The following is a 165-amino-acid chain: Protein SprT (165 aa).

The 142-residue stretch at 22 to 163 folds into the SprT-like domain; that stretch reads LAQANLKLDR…RCVHCGEPLV (142 aa). Residue His78 participates in Zn(2+) binding. The active site involves Glu79. Position 82 (His82) interacts with Zn(2+).

This sequence belongs to the SprT family. Requires Zn(2+) as cofactor.

It localises to the cytoplasm. The sequence is that of Protein SprT from Salmonella agona (strain SL483).